The primary structure comprises 368 residues: tRNA 2-selenouridine synthase (368 aa).

In terms of domain architecture, Rhodanese spans 15–138; sequence FLNQHPIMDV…LRQYLIGVIE (124 aa). The active-site S-selanylcysteine intermediate is Cys-98.

This sequence belongs to the SelU family. In terms of assembly, monomer.

It catalyses the reaction 5-methylaminomethyl-2-thiouridine(34) in tRNA + selenophosphate + (2E)-geranyl diphosphate + H2O + H(+) = 5-methylaminomethyl-2-selenouridine(34) in tRNA + (2E)-thiogeraniol + phosphate + diphosphate. The enzyme catalyses 5-methylaminomethyl-2-thiouridine(34) in tRNA + (2E)-geranyl diphosphate = 5-methylaminomethyl-S-(2E)-geranyl-thiouridine(34) in tRNA + diphosphate. The catalysed reaction is 5-methylaminomethyl-S-(2E)-geranyl-thiouridine(34) in tRNA + selenophosphate + H(+) = 5-methylaminomethyl-2-(Se-phospho)selenouridine(34) in tRNA + (2E)-thiogeraniol. It carries out the reaction 5-methylaminomethyl-2-(Se-phospho)selenouridine(34) in tRNA + H2O = 5-methylaminomethyl-2-selenouridine(34) in tRNA + phosphate. Functionally, involved in the post-transcriptional modification of the uridine at the wobble position (U34) of tRNA(Lys), tRNA(Glu) and tRNA(Gln). Catalyzes the conversion of 2-thiouridine (S2U-RNA) to 2-selenouridine (Se2U-RNA). Acts in a two-step process involving geranylation of 2-thiouridine (S2U) to S-geranyl-2-thiouridine (geS2U) and subsequent selenation of the latter derivative to 2-selenouridine (Se2U) in the tRNA chain. The chain is tRNA 2-selenouridine synthase from Shewanella baltica (strain OS223).